The sequence spans 727 residues: Pre-B-cell leukemia transcription factor-interacting protein 1 (727 aa).

Positions 1 to 10 (MASCPDSDNS) are enriched in polar residues. The segment at 1–169 (MASCPDSDNS…GREPSSSQPV (169 aa)) is disordered. Phosphoserine is present on residues Ser131, Ser142, Ser143, and Ser144. The residue at position 148 (Thr148) is a Phosphothreonine. Residue Ser164 is modified to Phosphoserine. 2 coiled-coil regions span residues 270–350 (FLLD…RGVD) and 377–405 (DPSL…WQLL). The segment covering 446–456 (QGINTGRSPND) has biased composition (polar residues). Disordered stretches follow at residues 446–565 (QGIN…NSPD) and 694–727 (LKKR…YHQG). Residues 473–563 (WGGKEKWRGG…QKHSWGKDNS (91 aa)) are compositionally biased toward basic and acidic residues. The Nuclear localization signal signature appears at 486 to 506 (QKAEHWKPRKEESGQERQRSW). A Phosphoserine modification is found at Ser563. Residues 691-716 (DKALKKRSRKKEKHSWNPRVVGPREE) carry the Nuclear localization signal motif. The segment covering 694-703 (LKKRSRKKEK) has biased composition (basic residues).

Interacts with ESR1, PBX1, PBX2 and PBX3. Interacts with TEX11.

Its subcellular location is the cytoplasm. The protein localises to the cytoskeleton. It localises to the nucleus. Regulator of pre-B-cell leukemia transcription factors (BPXs) function. Inhibits the binding of PBX1-HOX complex to DNA and blocks the transcriptional activity of E2A-PBX1. Tethers estrogen receptor-alpha (ESR1) to microtubules and allows them to influence estrogen receptors-alpha signaling. The sequence is that of Pre-B-cell leukemia transcription factor-interacting protein 1 (Pbxip1) from Mus musculus (Mouse).